Here is a 130-residue protein sequence, read N- to C-terminus: MASNFTQFVLVDNGGTGDVTVAPSNFANGVAEWISSNSRSQAYKVTCSVRQSSAQNRKYTIKVEVPKVATQTVGGVELPVAAWRSYLNMELTIPIFATNSDCELIVKAMQGLLKDGNPIPSAIAANSGIY.

The tract at residues 32–105 (EWISSNSRSQ…FATNSDCELI (74 aa)) is viral RNA-binding.

Belongs to the Leviviricetes capsid protein family. In terms of assembly, homodimer. The capsid proteins form dimers that assemble by group of 5. Twelve such pentamers are linked together with free dimers. The homodimers binds to the viral RNA via an operator hairpin, but also to many other RNA sequences in the viral genome; this interaction probably shifts the virus from the replicative to the assembly phase and ensures specific encapsidation of the viral genome.

It is found in the virion. Capsid protein self-assembles to form an icosahedral capsid with a T=3 symmetry, about 26 nm in diameter, and consisting of 89 capsid proteins dimers (178 capsid proteins). Involved in viral genome encapsidation through the interaction between a capsid protein dimer and the multiple packaging signals present in the RNA genome. The capsid also contains 1 copy of the A2 maturation protein. In terms of biological role, acts as a translational repressor of viral replicase synthesis late in infection. This latter function is the result of capsid protein interaction with an RNA hairpin which contains the replicase ribosome-binding site. This chain is Capsid protein, found in Escherichia coli (Bacteriophage MS2).